A 347-amino-acid polypeptide reads, in one-letter code: Protein RecA (347 aa).

64-71 (GPESSGKT) is an ATP binding site.

Belongs to the RecA family.

It localises to the cytoplasm. Can catalyze the hydrolysis of ATP in the presence of single-stranded DNA, the ATP-dependent uptake of single-stranded DNA by duplex DNA, and the ATP-dependent hybridization of homologous single-stranded DNAs. It interacts with LexA causing its activation and leading to its autocatalytic cleavage. This Bartonella tribocorum (strain CIP 105476 / IBS 506) protein is Protein RecA.